The chain runs to 344 residues: Plastoglobule-localized metallopeptidase 48, chloroplastic (344 aa).

The transit peptide at 1–47 (MAVSVSAPVLSLCYNQSGELSRSLGYRLPKKVGFSSGRRSVSYIGFG) directs the protein to the chloroplast. 2 helical membrane-spanning segments follow: residues 102-122 (LLGS…SVLV) and 169-189 (FIVV…QAVL). His191 contacts Zn(2+). Glu192 is a catalytic residue. His195 provides a ligand contact to Zn(2+). Residues 201 to 221 (GVWLTFANILTLGAYTVPAFG) form a helical membrane-spanning segment. Glu240 is a binding site for Zn(2+). Residues 256–272 (VVVSVLMKLAGGCPSIA) traverse the membrane as a helical segment.

It belongs to the peptidase M48 family. M48D subfamily. Interacts with plastoglobule (PG) core proteins ABC1K3, PES1 and CCD4. The cofactor is Zn(2+). In terms of tissue distribution, mostly expressed in flowers (e.g. sepals, petals and stamen), seeds, leaves and cotyledons.

The protein resides in the plastid. Its subcellular location is the chloroplast. The protein localises to the plastoglobule. It is found in the chloroplast membrane. Metalloendopeptidase with a Zn-dependent proteolytic activity and substrate cleavage upstream of hydrophobic residues. Positive regulator of senescence, probably by degrading CCD4, thus participating in the controlled removal of carotenoids from the thylakoid membrane during the senescence process. The chain is Plastoglobule-localized metallopeptidase 48, chloroplastic from Arabidopsis thaliana (Mouse-ear cress).